A 100-amino-acid chain; its full sequence is Apolipoprotein C-II (100 aa).

A signal peptide spans 1–22 (MSSQFLLAFFLVLLVLGYEVQG). Positions 66–74 (SVDEKLRDM) are lipid binding. The interval 78-100 (SSAAMSTYAGIFTDQLFTLLKGE) is lipoprotein lipase cofactor.

It belongs to the apolipoprotein C2 family. In terms of processing, proapolipoprotein C-II is synthesized as a sialic acid containing glycoprotein which is subsequently desialylated prior to its proteolytic processing. Proapolipoprotein C-II, the major form found in plasma undergoes proteolytic cleavage of its N-terminal hexapeptide to generate the mature form apolipoprotein C-II, which occurs as the minor form in plasma.

The protein resides in the secreted. Component of chylomicrons, very low-density lipoproteins (VLDL), low-density lipoproteins (LDL), and high-density lipoproteins (HDL) in plasma. Plays an important role in lipoprotein metabolism as an activator of lipoprotein lipase. In Cricetulus griseus (Chinese hamster), this protein is Apolipoprotein C-II (APOC2).